The following is a 67-amino-acid chain: SPbeta prophage-derived uncharacterized protein YoqF (67 aa).

This Bacillus subtilis (strain 168) protein is SPbeta prophage-derived uncharacterized protein YoqF (yoqF).